A 490-amino-acid chain; its full sequence is Aspartyl/glutamyl-tRNA(Asn/Gln) amidotransferase subunit B (490 aa).

The protein belongs to the GatB/GatE family. GatB subfamily. In terms of assembly, heterotrimer of A, B and C subunits.

It carries out the reaction L-glutamyl-tRNA(Gln) + L-glutamine + ATP + H2O = L-glutaminyl-tRNA(Gln) + L-glutamate + ADP + phosphate + H(+). The catalysed reaction is L-aspartyl-tRNA(Asn) + L-glutamine + ATP + H2O = L-asparaginyl-tRNA(Asn) + L-glutamate + ADP + phosphate + 2 H(+). Its function is as follows. Allows the formation of correctly charged Asn-tRNA(Asn) or Gln-tRNA(Gln) through the transamidation of misacylated Asp-tRNA(Asn) or Glu-tRNA(Gln) in organisms which lack either or both of asparaginyl-tRNA or glutaminyl-tRNA synthetases. The reaction takes place in the presence of glutamine and ATP through an activated phospho-Asp-tRNA(Asn) or phospho-Glu-tRNA(Gln). The chain is Aspartyl/glutamyl-tRNA(Asn/Gln) amidotransferase subunit B from Prochlorococcus marinus (strain MIT 9515).